Reading from the N-terminus, the 591-residue chain is Cytidine monophosphate-N-acetylneuraminic acid hydroxylase (591 aa).

A Rieske domain is found at 16–114; the sequence is LASAEVESLK…IENDDENGVS (99 aa). [2Fe-2S] cluster-binding residues include C56, H58, C77, and H80.

It belongs to the CMP-Neu5Ac hydroxylase family. [2Fe-2S] cluster is required as a cofactor.

The protein resides in the cytoplasm. The catalysed reaction is CMP-N-acetyl-beta-neuraminate + 2 Fe(II)-[cytochrome b5] + O2 + 2 H(+) = CMP-N-glycoloyl-beta-neuraminate + 2 Fe(III)-[cytochrome b5] + H2O. Its pathway is amino-sugar metabolism; N-acetylneuraminate metabolism. Sialic acids are components of carbohydrate chains of glycoconjugates and are involved in cell-cell recognition and cell-pathogen interactions. Catalyzes the conversion of CMP-N-acetylneuraminic acid (CMP-Neu5Ac) into its hydroxylated derivative CMP-N-glycolylneuraminic acid (CMP-Neu5Gc), a sialic acid abundantly expressed at the surface of many cells. The sequence is that of Cytidine monophosphate-N-acetylneuraminic acid hydroxylase (cmah) from Xenopus laevis (African clawed frog).